The sequence spans 424 residues: Type II methyltransferase M.XorII (424 aa).

One can recognise an SAM-dependent MTase C5-type domain in the interval 4–367; it reads PIGIDLFAGA…GQIMKALRKK (364 aa). Cys83 is a catalytic residue. The interval 404–424 is disordered; sequence RSRPVDRPAPRRHEERELVTA. The segment covering 406–424 has biased composition (basic and acidic residues); the sequence is RPVDRPAPRRHEERELVTA.

It belongs to the class I-like SAM-binding methyltransferase superfamily. C5-methyltransferase family.

The catalysed reaction is a 2'-deoxycytidine in DNA + S-adenosyl-L-methionine = a 5-methyl-2'-deoxycytidine in DNA + S-adenosyl-L-homocysteine + H(+). Functionally, a methylase that recognizes the double-stranded sequence 5'-CGATCG-3', methylates C-? on both strands and protects the DNA from cleavage by the XorII endonuclease. The protein is Type II methyltransferase M.XorII (xorIIM) of Xanthomonas oryzae pv. oryzae (strain KACC10331 / KXO85).